A 519-amino-acid chain; its full sequence is MLEIITVRKVFLIGFLILILNWVWRAVNWVWLRPKRLEKYLKKQGFSGNSYRILMGDMRESNQMDQVAHSLPLPLDADFLPRMMPFLHHTVLKHGKKCFTWYGPYPNVIVMDPETLREIMSKHELFPKPKIGSHNHVFLSGLLNHEGPKWSKHRSILNPAFRIDNLKSILPAFNSSCKEMLEEWERLASAKGTMELDSWTHCHDLTRNMLARASFGDSYKDGIKIFEIQQEQIDLGLLAIRAVYIPGSKFLPTKFNRRLRETERDMRAMFKAMIETKEEEIKRGRGTDKNSDLLFSMLASNTKTIKEQGPDSGLSLDDLIDDCKAFYLAGQNVTSSLFVWTLVALSQHQDWQNKARDEISQAFGNNEPDFEGLSHLKVVTMILHEVLRLYSPAYFTCRITKQEVKLERFSLPEGVVVTIPMLLVHHDSDLWGDDVKEFKPERFANGVAGATKGRLSFLPFSSGPRTCIGQNFSMLQAKLFLAMVLQRFSVELSPSYTHAPFPAATTFPQHGAHLIIRKL.

A helical transmembrane segment spans residues 10-30; it reads VFLIGFLILILNWVWRAVNWV. Position 467 (Cys-467) interacts with heme.

The protein belongs to the cytochrome P450 family. It depends on heme as a cofactor. In terms of tissue distribution, expressed in hypocotyls, roots, cotyledons, stamens and silique junctions.

It is found in the membrane. In terms of biological role, atypical cytochrome P450 involved in brassinosteroids (BRs) inactivation and regulation of BRs homeostasis. Does not possess carbon 26 hydroxylase activity and may inactivate BRs by hydroxylation of carbons other than C-26. Acts in association with CYP734A1 to inactivate BRs and modulate photomorphogenesis. The protein is Cytochrome P450 72C1 (CYP72C1) of Arabidopsis thaliana (Mouse-ear cress).